The sequence spans 339 residues: 1-aminocyclopropane-1-carboxylate deaminase (339 aa).

An N6-(pyridoxal phosphate)lysine modification is found at K52. Catalysis depends on S79, which acts as the Nucleophile.

The protein belongs to the ACC deaminase/D-cysteine desulfhydrase family. Homotrimer. Pyridoxal 5'-phosphate serves as cofactor.

It catalyses the reaction 1-aminocyclopropane-1-carboxylate + H2O = 2-oxobutanoate + NH4(+). Functionally, catalyzes a cyclopropane ring-opening reaction, the irreversible conversion of 1-aminocyclopropane-1-carboxylate (ACC) to ammonia and alpha-ketobutyrate. Allows growth on ACC as a nitrogen source. This chain is 1-aminocyclopropane-1-carboxylate deaminase, found in Rhizobium leguminosarum bv. viciae.